A 307-amino-acid chain; its full sequence is MRSRDMERGRKHRGDTQWTAWLTPTIVVANVSIFIVVMYTNDCPKTTTGANGDCVAKLLRRFSFQPLRENPFLGPSSSTLEKLGALDWKKVVQGNEKWRLITAMWLHAGIIHLVMNMFDVIIFGIRLEQQFGFIRIGLIYLISGFGGSILSALFLQKSISVGASGALLGLMGAMLSELLTNWTIYKSKLCALLSFLFIIAINLAIGLLPWVDNFAHIGGLLTGFCLGFILLMQPQSGWEEFRNSSQYGARARSKYNPCQYVLFFVAAVLVVAGLTVGLVMLFDGENGNKHCKWCHRLDCYPTSKWSC.

The N-terminal 62 residues, 1–62 (MRSRDMERGR…DCVAKLLRRF (62 aa)), are a transit peptide targeting the mitochondrion. The next 6 membrane-spanning stretches (helical) occupy residues 105-125 (WLHAGIIHLVMNMFDVIIFGI), 136-156 (IGLIYLISGFGGSILSALFLQ), 159-179 (ISVGASGALLGLMGAMLSELL), 191-211 (ALLSFLFIIAINLAIGLLPWV), 214-234 (FAHIGGLLTGFCLGFILLMQP), and 262-282 (LFFVAAVLVVAGLTVGLVMLF). Catalysis depends on serine 164, which acts as the Nucleophile. Histidine 216 (charge relay system) is an active-site residue.

The protein belongs to the peptidase S54 family.

Its subcellular location is the mitochondrion membrane. It catalyses the reaction Cleaves type-1 transmembrane domains using a catalytic dyad composed of serine and histidine that are contributed by different transmembrane domains.. Functionally, probable rhomboid-type serine protease that catalyzes intramembrane proteolysis. Might be involved in response to abiotic stimuli. The sequence is that of RHOMBOID-like protein 6, mitochondrial from Arabidopsis thaliana (Mouse-ear cress).